Reading from the N-terminus, the 425-residue chain is MKVLVMGAGVIGVTTAYYLAKAGFEVTVIDRQPGPGLETSFANAGEVSPGYSSPWAGPGVPRKAIQWILDRHGPLVVRPQIDPAMWRWVVQMLRNCTASRYALNKSRMVGIAEYSRDCLRALRADIGITYDERSQGTLQLFRKQSQLDAIGGDVEILRQYNVPFEVLDRAGCIRAEPGLAAVQNSFVGGLRLVDDETGDCHLFTQRLEAAAAALGVNFVYETTIRSIDAQGGAVAGVTTDKGRFVADRYVMALGSFSPLLLRPLGIDIPVYPVKGYSITVPIVDEPASPRSTVMDESYKVAITRLGDRIRVGGTAEIGDYQPRLRPNRRVTLDRSLTDLFPGAGDLSQATFWSGLRPMTPDGPPIIGPTRLANLHLNTGHGTLGWTMACGAARVAVDQLRSVEPEIDARALSLSRYQSGAASLGA.

3-17 (VLVMGAGVIGVTTAY) is a binding site for FAD.

This sequence belongs to the DadA oxidoreductase family. The cofactor is FAD.

It carries out the reaction a D-alpha-amino acid + A + H2O = a 2-oxocarboxylate + AH2 + NH4(+). Its pathway is amino-acid degradation; D-alanine degradation; NH(3) and pyruvate from D-alanine: step 1/1. Its function is as follows. Oxidative deamination of D-amino acids. The polypeptide is D-amino acid dehydrogenase (Rhodopseudomonas palustris (strain HaA2)).